Consider the following 146-residue polypeptide: MGFTDKQEALVNSSWELFKQNPGYSVLFYNIILKKAPATKGMFSFLKDSAGVVDSPKLQAHAEKVFGMVHDSAVQLRVSGEVVLGDATLGAIHIQKGVVDSHFVVVKEALLETIKEASGEKWSEELSTAWEVAYEGLASAIKKAMS.

The 145-residue stretch at 2 to 146 (GFTDKQEALV…LASAIKKAMS (145 aa)) folds into the Globin domain. 2 positions are modified to nitrated tyrosine: Tyr-24 and Tyr-29. Residue Ser-44 coordinates heme b. Ser-44 is modified (phosphoserine). His-61 is an O2 binding site. Heme b-binding residues include Lys-64, His-93, and Lys-96. Tyr-134 bears the Nitrated tyrosine mark.

This sequence belongs to the plant globin family. In terms of assembly, monomer. In terms of processing, nitrated in effective nodules and particularly in hypoxic conditions; this mechanism may play a protective role in the symbiosis by buffering toxic peroxynitrite NO(2)(-). Nitration level decrease during nodule senescence. Post-translationally, phosphorylation at Ser-44 disrupts the molecular environment of its porphyrin ring oxygen binding pocket, thus leading to a reduced oxygen consumption and to the delivery of oxygen O(2) to symbiosomes. In terms of tissue distribution, root nodules.

The protein localises to the cytoplasm. Its subcellular location is the cytosol. It localises to the nucleus. Leghemoglobin that reversibly binds oxygen O(2) through a pentacoordinated heme iron. In root nodules, facilitates the diffusion of oxygen to the bacteroids while preventing the bacterial nitrogenase from being inactivated by buffering dioxygen, nitric oxide and carbon monoxide, and promoting the formation of reactive oxygen species (ROS, e.g. H(2)O(2)). This role is essential for symbiotic nitrogen fixation (SNF). In Pisum sativum (Garden pea), this protein is Leghemoglobin Lb120-29.